Here is a 167-residue protein sequence, read N- to C-terminus: SsrA-binding protein (167 aa).

Positions 139–158 (QNHDKRDAAKERDWQRDKQR) are enriched in basic and acidic residues. Residues 139–167 (QNHDKRDAAKERDWQRDKQRVMRRHNRDA) are disordered.

The protein belongs to the SmpB family.

The protein localises to the cytoplasm. Its function is as follows. Required for rescue of stalled ribosomes mediated by trans-translation. Binds to transfer-messenger RNA (tmRNA), required for stable association of tmRNA with ribosomes. tmRNA and SmpB together mimic tRNA shape, replacing the anticodon stem-loop with SmpB. tmRNA is encoded by the ssrA gene; the 2 termini fold to resemble tRNA(Ala) and it encodes a 'tag peptide', a short internal open reading frame. During trans-translation Ala-aminoacylated tmRNA acts like a tRNA, entering the A-site of stalled ribosomes, displacing the stalled mRNA. The ribosome then switches to translate the ORF on the tmRNA; the nascent peptide is terminated with the 'tag peptide' encoded by the tmRNA and targeted for degradation. The ribosome is freed to recommence translation, which seems to be the essential function of trans-translation. This Xanthomonas oryzae pv. oryzae (strain PXO99A) protein is SsrA-binding protein.